A 630-amino-acid polypeptide reads, in one-letter code: 1-deoxy-D-xylulose-5-phosphate synthase (630 aa).

Residues histidine 87 and 128 to 130 each bind thiamine diphosphate; that span reads GHS. A Mg(2+)-binding site is contributed by aspartate 159. Residues 160–161, asparagine 188, phenylalanine 295, and glutamate 377 each bind thiamine diphosphate; that span reads GA. Asparagine 188 lines the Mg(2+) pocket.

The protein belongs to the transketolase family. DXPS subfamily. Homodimer. Requires Mg(2+) as cofactor. It depends on thiamine diphosphate as a cofactor.

The enzyme catalyses D-glyceraldehyde 3-phosphate + pyruvate + H(+) = 1-deoxy-D-xylulose 5-phosphate + CO2. It functions in the pathway metabolic intermediate biosynthesis; 1-deoxy-D-xylulose 5-phosphate biosynthesis; 1-deoxy-D-xylulose 5-phosphate from D-glyceraldehyde 3-phosphate and pyruvate: step 1/1. In terms of biological role, catalyzes the acyloin condensation reaction between C atoms 2 and 3 of pyruvate and glyceraldehyde 3-phosphate to yield 1-deoxy-D-xylulose-5-phosphate (DXP). The sequence is that of 1-deoxy-D-xylulose-5-phosphate synthase from Pseudomonas savastanoi pv. phaseolicola (strain 1448A / Race 6) (Pseudomonas syringae pv. phaseolicola (strain 1448A / Race 6)).